Here is an 876-residue protein sequence, read N- to C-terminus: Leucine--tRNA ligase (876 aa).

The 'HIGH' region motif lies at 43–53 (PYPSGRIHMGH). The 'KMSKS' region motif lies at 632–636 (KMSKS). K635 provides a ligand contact to ATP.

Belongs to the class-I aminoacyl-tRNA synthetase family.

It is found in the cytoplasm. It carries out the reaction tRNA(Leu) + L-leucine + ATP = L-leucyl-tRNA(Leu) + AMP + diphosphate. This is Leucine--tRNA ligase from Sinorhizobium medicae (strain WSM419) (Ensifer medicae).